The chain runs to 208 residues: Small ribosomal subunit protein uS4 (208 aa).

Positions 97 to 158 constitute an S4 RNA-binding domain; sequence TRLDNVIYRM…RAQKYLCVQE (62 aa).

It belongs to the universal ribosomal protein uS4 family. Part of the 30S ribosomal subunit. Contacts protein S5. The interaction surface between S4 and S5 is involved in control of translational fidelity.

Its function is as follows. One of the primary rRNA binding proteins, it binds directly to 16S rRNA where it nucleates assembly of the body of the 30S subunit. With S5 and S12 plays an important role in translational accuracy. The sequence is that of Small ribosomal subunit protein uS4 from Xylella fastidiosa (strain 9a5c).